A 109-amino-acid polypeptide reads, in one-letter code: Parvalbumin beta 2 (109 aa).

An N-acetylalanine modification is found at Ala2. EF-hand domains lie at 39–74 and 78–109; these read KSPA…FSAG and LSDA…MIKA. 11 residues coordinate Ca(2+): Asp52, Asp54, Ser56, Phe58, Glu60, Glu63, Asp91, Asp93, Asp95, Lys97, and Glu102.

The protein belongs to the parvalbumin family. As to quaternary structure, monomer.

In terms of biological role, in muscle, parvalbumin is thought to be involved in relaxation after contraction. It binds two calcium ions. This chain is Parvalbumin beta 2, found in Gadus morhua (Atlantic cod).